Consider the following 704-residue polypeptide: Ribosomal RNA large subunit methyltransferase K/L (704 aa).

This sequence belongs to the methyltransferase superfamily. RlmKL family.

It is found in the cytoplasm. It catalyses the reaction guanosine(2445) in 23S rRNA + S-adenosyl-L-methionine = N(2)-methylguanosine(2445) in 23S rRNA + S-adenosyl-L-homocysteine + H(+). It carries out the reaction guanosine(2069) in 23S rRNA + S-adenosyl-L-methionine = N(2)-methylguanosine(2069) in 23S rRNA + S-adenosyl-L-homocysteine + H(+). In terms of biological role, specifically methylates the guanine in position 2445 (m2G2445) and the guanine in position 2069 (m7G2069) of 23S rRNA. This chain is Ribosomal RNA large subunit methyltransferase K/L, found in Alcanivorax borkumensis (strain ATCC 700651 / DSM 11573 / NCIMB 13689 / SK2).